The chain runs to 513 residues: Lysine--tRNA ligase (513 aa).

Residues 1–11 (MTEPTQPNAAQ) show a composition bias toward polar residues. Positions 1–22 (MTEPTQPNAAQPNVVPEVDDNK) are disordered. The Mg(2+) site is built by glutamate 423 and glutamate 430.

Belongs to the class-II aminoacyl-tRNA synthetase family. Homodimer. Mg(2+) is required as a cofactor.

It is found in the cytoplasm. The catalysed reaction is tRNA(Lys) + L-lysine + ATP = L-lysyl-tRNA(Lys) + AMP + diphosphate. The polypeptide is Lysine--tRNA ligase (Paraburkholderia xenovorans (strain LB400)).